Here is a 471-residue protein sequence, read N- to C-terminus: ATP synthase subunit beta 1 (471 aa).

An ATP-binding site is contributed by 157 to 164 (GGAGVGKT).

Belongs to the ATPase alpha/beta chains family. In terms of assembly, F-type ATPases have 2 components, CF(1) - the catalytic core - and CF(0) - the membrane proton channel. CF(1) has five subunits: alpha(3), beta(3), gamma(1), delta(1), epsilon(1). CF(0) has three main subunits: a(1), b(2) and c(9-12). The alpha and beta chains form an alternating ring which encloses part of the gamma chain. CF(1) is attached to CF(0) by a central stalk formed by the gamma and epsilon chains, while a peripheral stalk is formed by the delta and b chains.

The protein localises to the cell inner membrane. The enzyme catalyses ATP + H2O + 4 H(+)(in) = ADP + phosphate + 5 H(+)(out). Produces ATP from ADP in the presence of a proton gradient across the membrane. The catalytic sites are hosted primarily by the beta subunits. This is ATP synthase subunit beta 1 from Pelobacter propionicus (strain DSM 2379 / NBRC 103807 / OttBd1).